The primary structure comprises 191 residues: GDP-mannose pyrophosphatase (191 aa).

GDP-alpha-D-mannose-binding positions include Tyr-17, 38–40 (KRE), Arg-67, and 85–87 (AGL). One can recognise a Nudix hydrolase domain in the interval 43 to 180 (DRGNGATILL…EIRDGKTVLL (138 aa)). Ala-85, Glu-100, and Glu-104 together coordinate Mg(2+). Positions 86–106 (GLLDNDEPEVCIRKEAIEETG) match the Nudix box motif. Residues Glu-104, Glu-127, 150–151 (DE), and Lys-176 each bind GDP-alpha-D-mannose. Residue Glu-151 coordinates Mg(2+).

It belongs to the Nudix hydrolase family. NudK subfamily. Homodimer. Requires Mg(2+) as cofactor.

It carries out the reaction GDP-alpha-D-mannose + H2O = alpha-D-mannose 1-phosphate + GMP + 2 H(+). Its function is as follows. Nucleoside diphosphate sugar hydrolase that hydrolyzes GDP-mannose as its preferred substrate, yielding GMP and mannose-1-phosphate. The sequence is that of GDP-mannose pyrophosphatase (nudK) from Salmonella typhi.